Reading from the N-terminus, the 2155-residue chain is Alpha-tectorin (2155 aa).

A signal peptide spans 1 to 24 (MNYSSLLRIWVSFIFALVRHQAQP). Asparagine 34, asparagine 187, asparagine 215, asparagine 278, asparagine 455, asparagine 506, asparagine 528, and asparagine 560 each carry an N-linked (GlcNAc...) asparagine glycan. Residues 98–252 (PFWADVHNGI…GRWAFKVDGK (155 aa)) enclose the NIDO domain. One can recognise a VWFC domain in the interval 260-314 (CTSRGQFLRRGEVFWDDLNCTIKCRCLDFNNEIYCQEASCSPYEVCEPKGRFFYC). In terms of domain architecture, VWFD 1 spans 320 to 500 (STCVVFGEPH…RVYHADWKCG (181 aa)). 2 cysteine pairs are disulfide-bonded: cysteine 322-cysteine 461 and cysteine 344-cysteine 499. The TIL 1 domain occupies 597 to 650 (CPSFSHYSVCTSSCPDTCSDLTASQNCATPCTEGCECNEGFVLSTSQCVPLHKC). Asparagine 670, asparagine 687, asparagine 813, asparagine 843, asparagine 855, asparagine 898, asparagine 920, asparagine 931, and asparagine 949 each carry an N-linked (GlcNAc...) asparagine glycan. A VWFD 2 domain is found at 711-886 (TVCLLSQNQV…SWTTFEEICN (176 aa)). Cysteines 713 and 849 form a disulfide. The TIL 2 domain maps to 984–1036 (CPENSHFEECMTCTETCETLALGPICVDSCSEGCQCDEGYALQGSQCVPRSEC). N-linked (GlcNAc...) asparagine glycans are attached at residues asparagine 1048, asparagine 1064, asparagine 1235, and asparagine 1364. One can recognise a VWFD 3 domain in the interval 1098 to 1278 (ASCIVSGYGH…SWVKRDTFCQ (181 aa)). 2 disulfides stabilise this stretch: cysteine 1100–cysteine 1241 and cysteine 1122–cysteine 1277. A TIL 3 domain is found at 1372-1425 (CPPNSHYESCVSVCQPRCAAIRLKSDCNHYCVEGCQCDAGYVLNGKSCILPHNC). Positions 1485–1666 (SYCLAAGGGV…QKRPLAPSCN (182 aa)) constitute a VWFD 4 domain. Disulfide bonds link cysteine 1487/cysteine 1622, cysteine 1509/cysteine 1665, cysteine 1717/cysteine 1775, cysteine 1741/cysteine 1784, cysteine 1786/cysteine 1818, cysteine 1806/cysteine 1898, and cysteine 1837/cysteine 1857. Asparagine 1538, asparagine 1565, asparagine 1756, asparagine 1772, asparagine 1794, asparagine 1851, asparagine 1864, asparagine 1880, asparagine 1920, and asparagine 1939 each carry an N-linked (GlcNAc...) asparagine glycan. One can recognise a ZP domain in the interval 1805 to 2059 (TCKAAQMEVS…YSCKINCPQN (255 aa)). Intrachain disulfides connect cysteine 1980-cysteine 2040, cysteine 2001-cysteine 2056, and cysteine 2045-cysteine 2052. A lipid anchor (GPI-anchor amidated asparagine) is attached at asparagine 2091. Residues 2092 to 2155 (GGCEQICTSR…HLIYKSGATS (64 aa)) constitute a propeptide, removed in mature form.

In terms of assembly, may form homomeric filament after self-association or heteromeric filament after association with beta-tectorin. Interacts with CEACAM16. 3 products of tectorin seem to exist: HMM, MMM and LMM. They may be generated by active processing or the result of proteolysis occurring between intrachain disulfide bonds. In terms of processing, the presence of a hydrophobic C-terminus preceded by a potential cleavage site strongly suggests that tectorins are synthesized as glycosylphosphatidylinositol-linked, membrane-bound precursors. Tectorins are targeted to the apical surface of the inner ear epithelia by the lipid and proteolytically released into the extracellular compartment. Cochlea-specific.

Its subcellular location is the cell membrane. It localises to the secreted. The protein localises to the extracellular space. It is found in the extracellular matrix. In terms of biological role, one of the major non-collagenous components of the tectorial membrane. The tectorial membrane is an extracellular matrix of the inner ear that covers the neuroepithelium of the cochlea and contacts the stereocilia bundles of specialized sensory hair cells. Sound induces movement of these hair cells relative to the tectorial membrane, deflects the stereocilia and leads to fluctuations in hair-cell membrane potential, transducing sound into electrical signals. This Mus musculus (Mouse) protein is Alpha-tectorin (Tecta).